A 206-amino-acid chain; its full sequence is Glycerol-3-phosphate acyltransferase 1 (206 aa).

A run of 5 helical transmembrane segments spans residues 14–34 (IALA…GLIL), 67–87 (ATLL…SYFL), 91–111 (AAII…WIGF), 124–144 (LLGV…AVAF), and 148–168 (YSSL…WILG).

This sequence belongs to the PlsY family. Probably interacts with PlsX.

The protein resides in the cell inner membrane. It carries out the reaction an acyl phosphate + sn-glycerol 3-phosphate = a 1-acyl-sn-glycero-3-phosphate + phosphate. The protein operates within lipid metabolism; phospholipid metabolism. Its function is as follows. Catalyzes the transfer of an acyl group from acyl-phosphate (acyl-PO(4)) to glycerol-3-phosphate (G3P) to form lysophosphatidic acid (LPA). This enzyme utilizes acyl-phosphate as fatty acyl donor, but not acyl-CoA or acyl-ACP. The polypeptide is Glycerol-3-phosphate acyltransferase 1 (Rhizobium johnstonii (strain DSM 114642 / LMG 32736 / 3841) (Rhizobium leguminosarum bv. viciae)).